An 841-amino-acid chain; its full sequence is DNA ligase (841 aa).

NAD(+) contacts are provided by residues 33-37, 82-83, and Glu114; these read DAQYD and SL. The active-site N6-AMP-lysine intermediate is the Lys116. Residues Arg137, Glu174, Lys300, and Lys324 each contribute to the NAD(+) site. The Zn(2+) site is built by Cys418, Cys421, Cys436, and Cys442. The BRCT domain occupies 758-841; that stretch reads EKTGPLDGQT…AFLGEHGQQR (84 aa).

Belongs to the NAD-dependent DNA ligase family. LigA subfamily. Requires Mg(2+) as cofactor. The cofactor is Mn(2+).

The enzyme catalyses NAD(+) + (deoxyribonucleotide)n-3'-hydroxyl + 5'-phospho-(deoxyribonucleotide)m = (deoxyribonucleotide)n+m + AMP + beta-nicotinamide D-nucleotide.. Its function is as follows. DNA ligase that catalyzes the formation of phosphodiester linkages between 5'-phosphoryl and 3'-hydroxyl groups in double-stranded DNA using NAD as a coenzyme and as the energy source for the reaction. It is essential for DNA replication and repair of damaged DNA. The polypeptide is DNA ligase (Xanthomonas oryzae pv. oryzae (strain MAFF 311018)).